The following is a 325-amino-acid chain: Glutarate 2-hydroxylase (325 aa).

3 residues coordinate Fe cation: histidine 160, aspartate 162, and histidine 292.

The protein belongs to the glutarate hydroxylase family. In terms of assembly, homotetramer. Requires Fe(2+) as cofactor.

It catalyses the reaction glutarate + 2-oxoglutarate + O2 = (S)-2-hydroxyglutarate + succinate + CO2. The protein operates within amino-acid degradation. In terms of biological role, acts as an alpha-ketoglutarate-dependent dioxygenase catalyzing hydroxylation of glutarate (GA) to L-2-hydroxyglutarate (L2HG). Functions in a L-lysine degradation pathway that proceeds via cadaverine, glutarate and L-2-hydroxyglutarate. This is Glutarate 2-hydroxylase from Escherichia coli O7:K1 (strain IAI39 / ExPEC).